A 414-amino-acid polypeptide reads, in one-letter code: Esterase FrsA (414 aa).

This sequence belongs to the FrsA family.

The catalysed reaction is a carboxylic ester + H2O = an alcohol + a carboxylate + H(+). Catalyzes the hydrolysis of esters. The chain is Esterase FrsA from Citrobacter koseri (strain ATCC BAA-895 / CDC 4225-83 / SGSC4696).